Reading from the N-terminus, the 428-residue chain is Probable pectin lyase F (428 aa).

The first 20 residues, 1–20 (MVLLHPLLTAAALLGASARA), serve as a signal peptide directing secretion. An intrachain disulfide couples Cys83 to Cys107. Arg257 is an active-site residue. Asn276 is a glycosylation site (N-linked (GlcNAc...) asparagine). Cys324 and Cys332 are disulfide-bonded. The interval 383 to 428 (GSGGSGAASSSVSITPSPTSSAIPSSSATPSSSAYARRHYARHHHY) is disordered. Low complexity predominate over residues 389-417 (AASSSVSITPSPTSSAIPSSSATPSSSAY). Basic residues predominate over residues 418-428 (ARRHYARHHHY).

Belongs to the polysaccharide lyase 1 family.

The protein localises to the secreted. The catalysed reaction is Eliminative cleavage of (1-&gt;4)-alpha-D-galacturonan methyl ester to give oligosaccharides with 4-deoxy-6-O-methyl-alpha-D-galact-4-enuronosyl groups at their non-reducing ends.. Its function is as follows. Pectinolytic enzymes consist of four classes of enzymes: pectin lyase, polygalacturonase, pectin methylesterase and rhamnogalacturonase. Among pectinolytic enzymes, pectin lyase is the most important in depolymerization of pectin, since it cleaves internal glycosidic bonds of highly methylated pectins. This is Probable pectin lyase F (pelF) from Aspergillus oryzae (strain ATCC 42149 / RIB 40) (Yellow koji mold).